We begin with the raw amino-acid sequence, 347 residues long: Phosphate acyltransferase (347 aa).

It belongs to the PlsX family. As to quaternary structure, homodimer. Probably interacts with PlsY.

The protein resides in the cytoplasm. It carries out the reaction a fatty acyl-[ACP] + phosphate = an acyl phosphate + holo-[ACP]. The protein operates within lipid metabolism; phospholipid metabolism. In terms of biological role, catalyzes the reversible formation of acyl-phosphate (acyl-PO(4)) from acyl-[acyl-carrier-protein] (acyl-ACP). This enzyme utilizes acyl-ACP as fatty acyl donor, but not acyl-CoA. In Dehalococcoides mccartyi (strain ATCC BAA-2100 / JCM 16839 / KCTC 5957 / BAV1), this protein is Phosphate acyltransferase.